Reading from the N-terminus, the 114-residue chain is Nucleoid-associated protein MAE_23910 (114 aa).

The protein belongs to the YbaB/EbfC family. In terms of assembly, homodimer.

It localises to the cytoplasm. It is found in the nucleoid. Binds to DNA and alters its conformation. May be involved in regulation of gene expression, nucleoid organization and DNA protection. This chain is Nucleoid-associated protein MAE_23910, found in Microcystis aeruginosa (strain NIES-843 / IAM M-2473).